Reading from the N-terminus, the 270-residue chain is ATP synthase subunit a (270 aa).

A run of 7 helical transmembrane segments spans residues 29-49, 87-107, 108-128, 140-160, 182-202, 220-240, and 241-261; these read VDTF…FAMV, IAPL…MDLF, PVDL…GLEP, DVNA…GFSI, PVGA…ELAA, LIFI…GAPW, and AIFH…LTIV.

The protein belongs to the ATPase A chain family. As to quaternary structure, F-type ATPases have 2 components, CF(1) - the catalytic core - and CF(0) - the membrane proton channel. CF(1) has five subunits: alpha(3), beta(3), gamma(1), delta(1), epsilon(1). CF(0) has three main subunits: a(1), b(2) and c(9-12). The alpha and beta chains form an alternating ring which encloses part of the gamma chain. CF(1) is attached to CF(0) by a central stalk formed by the gamma and epsilon chains, while a peripheral stalk is formed by the delta and b chains.

The protein localises to the cell inner membrane. In terms of biological role, key component of the proton channel; it plays a direct role in the translocation of protons across the membrane. The protein is ATP synthase subunit a of Chromobacterium violaceum (strain ATCC 12472 / DSM 30191 / JCM 1249 / CCUG 213 / NBRC 12614 / NCIMB 9131 / NCTC 9757 / MK).